The chain runs to 374 residues: Alanine racemase (374 aa).

The active-site Proton acceptor; specific for D-alanine is lysine 40. Lysine 40 bears the N6-(pyridoxal phosphate)lysine mark. Arginine 139 provides a ligand contact to substrate. Catalysis depends on tyrosine 261, which acts as the Proton acceptor; specific for L-alanine. Methionine 309 contributes to the substrate binding site.

This sequence belongs to the alanine racemase family. It depends on pyridoxal 5'-phosphate as a cofactor.

It catalyses the reaction L-alanine = D-alanine. Its pathway is amino-acid biosynthesis; D-alanine biosynthesis; D-alanine from L-alanine: step 1/1. In terms of biological role, catalyzes the interconversion of L-alanine and D-alanine. May also act on other amino acids. The polypeptide is Alanine racemase (alr) (Rhodospirillum rubrum (strain ATCC 11170 / ATH 1.1.1 / DSM 467 / LMG 4362 / NCIMB 8255 / S1)).